The primary structure comprises 151 residues: Arginine repressor (151 aa).

It belongs to the ArgR family.

Its subcellular location is the cytoplasm. Its pathway is amino-acid biosynthesis; L-arginine biosynthesis [regulation]. Its function is as follows. Regulates arginine biosynthesis genes. This chain is Arginine repressor, found in Pelotomaculum thermopropionicum (strain DSM 13744 / JCM 10971 / SI).